A 473-amino-acid chain; its full sequence is Adhesive plaque matrix protein 2 (473 aa).

The first 17 residues, 1–17, serve as a signal peptide directing secretion; it reads MLFSFFLLLTCTQLCLG. 3',4'-dihydroxyphenylalanine is present on residues Y23, Y31, Y36, and Y43. 11 consecutive EGF-like domains span residues 45 to 81, 82 to 117, 118 to 154, 155 to 191, 192 to 228, 229 to 265, 266 to 301, 302 to 340, 342 to 378, 383 to 420, and 425 to 461; these read PVNP…YNCN, LKNA…GRLC, EKNV…GPRC, EVHA…GPTC, QENA…GPEC, ERYV…GPTC, KVNV…GPTC, GENV…PTCE, KPNP…RHCT, and KKNP…RYCS. Disulfide bonds link C49/C60, C54/C69, C71/C80, C86/C97, C91/C106, C108/C117, C122/C133, C127/C143, C145/C154, C159/C170, C164/C180, C182/C191, C196/C207, C201/C217, C219/C228, C233/C244, C238/C254, C256/C265, C270/C281, C275/C290, C292/C301, C306/C317, C311/C328, C330/C339, C346/C357, C351/C366, C368/C377, C387/C399, C393/C408, C410/C419, C429/C440, C434/C449, and C451/C460. N93 carries an N-linked (GlcNAc...) asparagine glycan.

In terms of processing, contains L-DOPA (3',4'-dihydroxyphenylalanine). In terms of tissue distribution, produced by the byssal gland.

The protein localises to the secreted. Provides adhesiveness to the mussel's foot. Mussels produce one of the strongest water insoluble glues. The mussel's adhesive is a bundle of threads, called a byssus, formed by a fibrous collagenous core coated with adhesive proteins. This is Adhesive plaque matrix protein 2 (FP2) from Mytilus galloprovincialis (Mediterranean mussel).